Reading from the N-terminus, the 245-residue chain is tRNA pseudouridine synthase A (245 aa).

Residue Asp52 is the Nucleophile of the active site. Tyr111 lines the substrate pocket.

The protein belongs to the tRNA pseudouridine synthase TruA family. As to quaternary structure, homodimer.

The catalysed reaction is uridine(38/39/40) in tRNA = pseudouridine(38/39/40) in tRNA. Its function is as follows. Formation of pseudouridine at positions 38, 39 and 40 in the anticodon stem and loop of transfer RNAs. This chain is tRNA pseudouridine synthase A, found in Rickettsia rickettsii (strain Iowa).